Reading from the N-terminus, the 173-residue chain is Photosystem I assembly protein Ycf3 (173 aa).

TPR repeat units follow at residues alanine 35–alanine 68, glycine 72–glutamine 105, and glycine 120–glycine 153.

The protein belongs to the Ycf3 family.

Its subcellular location is the cellular thylakoid membrane. In terms of biological role, essential for the assembly of the photosystem I (PSI) complex. May act as a chaperone-like factor to guide the assembly of the PSI subunits. This chain is Photosystem I assembly protein Ycf3, found in Prochlorococcus marinus (strain SARG / CCMP1375 / SS120).